A 356-amino-acid chain; its full sequence is Chorismate synthase (356 aa).

Arg-48 and Arg-54 together coordinate NADP(+). Residues 125–127 (RSS), 237–238 (NA), Gly-281, 296–300 (KPTSS), and Arg-322 contribute to the FMN site.

The protein belongs to the chorismate synthase family. In terms of assembly, homotetramer. The cofactor is FMNH2.

The enzyme catalyses 5-O-(1-carboxyvinyl)-3-phosphoshikimate = chorismate + phosphate. It functions in the pathway metabolic intermediate biosynthesis; chorismate biosynthesis; chorismate from D-erythrose 4-phosphate and phosphoenolpyruvate: step 7/7. Its function is as follows. Catalyzes the anti-1,4-elimination of the C-3 phosphate and the C-6 proR hydrogen from 5-enolpyruvylshikimate-3-phosphate (EPSP) to yield chorismate, which is the branch point compound that serves as the starting substrate for the three terminal pathways of aromatic amino acid biosynthesis. This reaction introduces a second double bond into the aromatic ring system. In Novosphingobium aromaticivorans (strain ATCC 700278 / DSM 12444 / CCUG 56034 / CIP 105152 / NBRC 16084 / F199), this protein is Chorismate synthase.